Reading from the N-terminus, the 245-residue chain is Tetraspanin-16 (245 aa).

Over 1–13 (MAEIHTPYSSLKK) the chain is Cytoplasmic. The helical transmembrane segment at 14–34 (LLSLLNGFVAVSGIILVGLGI) threads the bilayer. The Extracellular segment spans residues 35–37 (GGK). The chain crosses the membrane as a helical span at residues 38–58 (CGGASLTNVLGLSSAYLLHVG). Position 59 (asparagine 59) is a topological domain, cytoplasmic. Residues 60 to 80 (LCLVMGCITVLLGCAGWYGAT) traverse the membrane as a helical segment. The Extracellular segment spans residues 81–94 (KESRGTLLFCILSM). A helical transmembrane segment spans residues 95-115 (VIVLIMEVTAATVVLLFFPIV). Residues 116–245 (GDVALEHTFV…VAQAGLELLA (130 aa)) lie on the Cytoplasmic side of the membrane.

Belongs to the tetraspanin (TM4SF) family. In terms of tissue distribution, broadly expressed in most human tissues and cell lines including neural and bone marrow derived tissues.

It localises to the membrane. The protein is Tetraspanin-16 (TSPAN16) of Homo sapiens (Human).